A 641-amino-acid chain; its full sequence is SH2 domain-containing protein A (641 aa).

The tract at residues valine 355–arginine 384 is disordered. The 95-residue stretch at tryptophan 547–isoleucine 641 folds into the SH2 domain.

In terms of processing, phosphorylated on tyrosine residues. In terms of tissue distribution, expressed in roots, leaves, stems and flowers.

The protein is SH2 domain-containing protein A of Arabidopsis thaliana (Mouse-ear cress).